The chain runs to 1622 residues: DNA (cytosine-5)-methyltransferase 1 (1622 aa).

The tract at residues 1–145 (MPARTAPARV…RRSKSDSETM (145 aa)) is interaction with DNMT3A. 2 interaction with the PRC2/EED-EZH2 complex regions span residues 1-342 (MPAR…VERK) and 304-610 (TPEP…TVIN). A Phosphoserine modification is found at Ser-15. The DMAP1-binding domain maps to 16–109 (PAGSLPDHVR…TQKANGCPAN (94 aa)). An N6,N6-dimethyllysine; by EHMT2 modification is found at Lys-70. The interval 100–360 (TQKANGCPAN…IPKLNPPQCP (261 aa)) is disordered. Positions 126–137 (PRSRPKPRGPRR) are enriched in basic residues. Ser-138 carries the phosphoserine modification. Lys-139 carries the post-translational modification N6-methyllysine; by SETD7. Ser-140 bears the Phosphoserine; by PKB/AKT1 mark. Residues 146-213 (IEASSSSVAT…TESRASRAGE (68 aa)) are interaction with DNMT3B. Phosphoserine is present on residues Ser-149 and Ser-151. Low complexity predominate over residues 149 to 166 (SSSSVATRRTTRQTTITS). Thr-163 is modified (phosphothreonine). Lys-169 is modified (N6-acetyllysine). A Nuclear localization signal motif is present at residues 173–200 (KRKPKEDSEKGNANESAAEERDQDKKRR). Composition is skewed to basic and acidic residues over residues 176–197 (PKED…DQDK), 207–222 (RASR…ERVR), 237–269 (DDRR…THLD), and 276–300 (KDKR…KEEV). The residue at position 304 (Thr-304) is a Phosphothreonine. Residues 327–556 (KPEPLSIPVQ…NVNRFTEDSL (230 aa)) form a DNA replication foci-targeting sequence region. Cys-359 and Cys-362 together coordinate Zn(2+). Residue Lys-372 is modified to N6-acetyllysine. A Phosphoserine modification is found at Ser-400. Positions 420 and 424 each coordinate Zn(2+). Ser-515 and Ser-555 each carry phosphoserine. The CXXC-type zinc-finger motif lies at 650–696 (NTMKRRRCGVCEVCQQPECGKCKACKDMVKFGGTGRSKQACLKRRCP). Zn(2+)-binding residues include Cys-657, Cys-660, Cys-663, Cys-668, Cys-671, Cys-674, Cys-690, and Cys-695. An autoinhibitory linker region spans residues 697–758 (NLAVKEADED…TYYWKVSIDE (62 aa)). A disordered region spans residues 702–733 (EADEDEEADDDIPELPSPKKLHQGKKKKQNKD). A compositionally biased stretch (acidic residues) spans 703-714 (ADEDEEADDDIP). Phosphoserine is present on Ser-718. The segment covering 720–731 (KKLHQGKKKKQN) has biased composition (basic residues). Ser-736 is subject to Phosphoserine. Residue Lys-753 is modified to N6-acetyllysine. The 126-residue stretch at 759 to 884 (ETLEVGDCVS…QDYARFESPP (126 aa)) folds into the BAH 1 domain. Residue Ser-882 is modified to Phosphoserine. N6-acetyllysine occurs at positions 895, 961, and 980. In terms of domain architecture, BAH 2 spans 977–1105 (TYRKYSDYIK…SKTKSFEDPP (129 aa)). The segment at 1099 to 1138 (KSFEDPPNHARSPGNKGKGKGKGKGKGKPQVSEPKEPEAA) is disordered. 6 consecutive repeat copies span residues 1114-1115 (KG), 1116-1117 (KG), 1118-1119 (KG), 1120-1121 (KG), 1122-1123 (KG), and 1124-1125 (KG). Residues 1114 to 1127 (KGKGKGKGKGKGKP) are 7 X 2 AA tandem repeats of K-G. Basic residues predominate over residues 1115–1125 (GKGKGKGKGKG). N6-acetyllysine is present on residues Lys-1116, Lys-1118, Lys-1120, Lys-1122, Lys-1124, and Lys-1126. A 7; approximate repeat occupies 1126–1127 (KP). Residues 1126–1622 (KPQVSEPKEP…KGKEETTTED (497 aa)) are interaction with the PRC2/EED-EZH2 complex. The SAM-dependent MTase C5-type domain occupies 1144-1603 (LRTLDVFSGC…LEIKLCLLAS (460 aa)). The interval 1144-1622 (LRTLDVFSGC…KGKEETTTED (479 aa)) is catalytic. Residues Ser-1151, 1155-1156 (GL), 1173-1174 (EM), 1195-1196 (DC), and Cys-1196 contribute to the S-adenosyl-L-methionine site. Cys-1231 is an active-site residue. Lys-1354 is subject to N6-acetyllysine. At Ser-1436 the chain carries Phosphoserine. Positions 1582 and 1584 each coordinate S-adenosyl-L-methionine. Lys-1613 participates in a covalent cross-link: Glycyl lysine isopeptide (Lys-Gly) (interchain with G-Cter in SUMO2).

Belongs to the class I-like SAM-binding methyltransferase superfamily. C5-methyltransferase family. As to quaternary structure, homodimer. Forms a stable complex with E2F1, BB1 and HDAC1. Forms a complex with DMAP1 and HDAC2, with direct interaction. Interacts with the PRC2/EED-EZH2 complex. Probably part of a corepressor complex containing ZNF304, TRIM28, SETDB1 and DNMT1. Interacts with UHRF1; promoting its recruitment to hemimethylated DNA. Interacts with USP7, promoting its deubiquitination. Interacts with PCNA. Interacts with MBD2 and MBD3. Interacts with DNMT3A and DNMT3B. Interacts with UBC9. Interacts with CSNK1D. Interacts with HDAC1. Interacts with BAZ2A/TIP5. Interacts with SIRT7. Interacts with ZNF263; recruited to the SIX3 promoter along with other proteins involved in chromatin modification and transcriptional corepression where it contributes to transcriptional repression. Interacts with L3MBTL3 and DCAF5; the interaction requires DNMT1 methylation at Lys-139 and is necessary to target DNMT1 for ubiquitination by the CRL4-DCAF5 E3 ubiquitin ligase complex and proteasomal degradation. Interacts with PHF20L1; the interaction requires DNMT1 methylation at Lys-139 and protects DNMT1 from ubiquitination and proteasomal degradation. Sumoylated; sumoylation increases activity. Post-translationally, acetylation on multiple lysines, mainly by KAT2B/PCAF, regulates cell cycle G(2)/M transition. Deacetylation of Lys-1116 and Lys-1354 by SIRT1 increases methyltransferase activity. In terms of processing, phosphorylation of Ser-151 by CDKs is important for enzymatic activity and protein stability. Phosphorylation of Ser-140 by AKT1 prevents methylation by SETD7 thereby increasing DNMT1 stability. Methylation at Lys-139 by SETD7 is necessary for the regulation of DNMT1 proteasomal degradation. Post-translationally, ubiquitinated by UHRF1; interaction with USP7 counteracts ubiquitination by UHRF1 by promoting deubiquitination and preventing degradation by the proteasome. Isoforms 0 and 8 are highly expressed in placenta, brain, lung, spleen, kidney, heart, and at much lower levels in liver. Isoform 1 is expressed in cerebellum, isoform 2 in muscle and testis, isoform 3 in lung, isoform 4 in spleen and brain, and isoform 5 in brain.

Its subcellular location is the nucleus. It catalyses the reaction a 2'-deoxycytidine in DNA + S-adenosyl-L-methionine = a 5-methyl-2'-deoxycytidine in DNA + S-adenosyl-L-homocysteine + H(+). Its function is as follows. Methylates CpG residues. Preferentially methylates hemimethylated DNA. Associates with DNA replication sites in S phase maintaining the methylation pattern in the newly synthesized strand, that is essential for epigenetic inheritance. Associates with chromatin during G2 and M phases to maintain DNA methylation independently of replication. It is responsible for maintaining methylation patterns established in development. DNA methylation is coordinated with methylation of histones. Mediates transcriptional repression by direct binding to HDAC2. In association with DNMT3B and via the recruitment of CTCFL/BORIS, involved in activation of BAG1 gene expression by modulating dimethylation of promoter histone H3 at H3K4 and H3K9. Probably forms a corepressor complex required for activated KRAS-mediated promoter hypermethylation and transcriptional silencing of tumor suppressor genes (TSGs) or other tumor-related genes in colorectal cancer (CRC) cells. Also required to maintain a transcriptionally repressive state of genes in undifferentiated embryonic stem cells (ESCs). Associates at promoter regions of tumor suppressor genes (TSGs) leading to their gene silencing. Promotes tumor growth. The polypeptide is DNA (cytosine-5)-methyltransferase 1 (Dnmt1) (Rattus norvegicus (Rat)).